An 84-amino-acid polypeptide reads, in one-letter code: Elongation factor 1-beta (84 aa).

This sequence belongs to the EF-1-beta/EF-1-delta family.

Functionally, promotes the exchange of GDP for GTP in EF-1-alpha/GDP, thus allowing the regeneration of EF-1-alpha/GTP that could then be used to form the ternary complex EF-1-alpha/GTP/AAtRNA. The protein is Elongation factor 1-beta of Methanoculleus marisnigri (strain ATCC 35101 / DSM 1498 / JR1).